The sequence spans 426 residues: MSKSENLYSAARELIPGGVNSPVRAFTGVGGTPLFIEKADGAYLYDVDGKAYIDYVGSWGPMVLGHNHPAIRNAVIEAAERGLSFGAPTEMEVKMAQLVTELVPTMDMVRMVNSGTEATMSAIRLARGFTGRDKIIKFEGCYHGHADCLLVKAGSGALTLGQPNSPGVPADFAKHTLTCTYNDLASVRAAFEQYPQEIACIIVEPVAGNMNCVPPLPEFLPGLRALCDEFGALLIIDEVMTGFRVALAGAQDYYGVEPDLTCLGKIIGGGMPVGAFGGRRDVMDALAPTGPVYQAGTLSGNPIAMAAGFACLNEVAQPGVHETLDELTTRLAEGLREAAEEAGIPLVVNHVGGMFGIFFTDAESVTCYQDVMACDVERFKRFFHMMLDEGVYLAPSAFEAGFMSVAHSMEDINNTIDAARRVFAKL.

N6-(pyridoxal phosphate)lysine is present on lysine 265.

It belongs to the class-III pyridoxal-phosphate-dependent aminotransferase family. HemL subfamily. In terms of assembly, homodimer. It depends on pyridoxal 5'-phosphate as a cofactor.

It is found in the cytoplasm. The enzyme catalyses (S)-4-amino-5-oxopentanoate = 5-aminolevulinate. The protein operates within porphyrin-containing compound metabolism; protoporphyrin-IX biosynthesis; 5-aminolevulinate from L-glutamyl-tRNA(Glu): step 2/2. The protein is Glutamate-1-semialdehyde 2,1-aminomutase of Escherichia coli O127:H6 (strain E2348/69 / EPEC).